The primary structure comprises 364 residues: Medium-wave-sensitive opsin 1 (364 aa).

The disordered stretch occupies residues M1–Q24. Residues M1 to V52 lie on the Extracellular side of the membrane. The segment at D17 to P43 is required for 11-cis-retinal regeneration. N-linked (GlcNAc...) asparagine glycosylation occurs at N34. Residues Y53 to A77 traverse the membrane as a helical segment. The Cytoplasmic segment spans residues T78–N89. A helical membrane pass occupies residues W90 to L115. The Extracellular portion of the chain corresponds to Y116–E129. A disulfide bond links C126 and C203. A helical membrane pass occupies residues G130–W149. The Cytoplasmic segment spans residues E150 to L168. Residues A169–S192 traverse the membrane as a helical segment. Over R193–S218 the chain is Extracellular. A helical transmembrane segment spans residues Y219–I246. The Cytoplasmic portion of the chain corresponds to R247–R268. Residues M269–T292 form a helical membrane-spanning segment. The Extracellular portion of the chain corresponds to A293–H300. Residues P301 to I320 form a helical membrane-spanning segment. Position 312 is an N6-(retinylidene)lysine (K312). The Cytoplasmic portion of the chain corresponds to I321–A364.

It belongs to the G-protein coupled receptor 1 family. Opsin subfamily. Monomer. Homodimer. Homotetramer. Post-translationally, O-glycosylated. Phosphorylated on some or all of the serine and threonine residues present in the C-terminal region. In terms of tissue distribution, expressed in cone photoreceptor cells.

It localises to the membrane. Visual pigments are the light-absorbing molecules that mediate vision. They consist of an apoprotein, opsin, covalently linked to cis-retinal. May increase spectral sensitivity in dim light. This is Medium-wave-sensitive opsin 1 (OPN1MW) from Sciurus carolinensis (Eastern gray squirrel).